Reading from the N-terminus, the 130-residue chain is Small ribosomal subunit protein uS11c (130 aa).

The protein belongs to the universal ribosomal protein uS11 family. Part of the 30S ribosomal subunit.

The protein localises to the plastid. Its subcellular location is the chloroplast. In Tupiella akineta (Green alga), this protein is Small ribosomal subunit protein uS11c.